The sequence spans 303 residues: Taste receptor type 2 member 13 (303 aa).

Over 1–7 the chain is Extracellular; it reads MESALPS. Residues 8–28 traverse the membrane as a helical segment; the sequence is IFTLVIIAEFIIGNLSNGFIV. The Cytoplasmic portion of the chain corresponds to 29–55; it reads LINCIDWVSKRELSSVDKLLIILAISR. A helical transmembrane segment spans residues 56 to 76; sequence IGLIWEILVSWFLALHYLAIF. The Extracellular segment spans residues 77–85; the sequence is VSGTGLRIM. The chain crosses the membrane as a helical span at residues 86–106; sequence IFSWIVSNHFNLWLATIFSIF. Residues 107 to 128 are Cytoplasmic-facing; the sequence is YLLKIASFSSPAFLYLKWRVNK. Residues 129 to 149 traverse the membrane as a helical segment; sequence VILMILLGTLVFLFLNLIQIN. Residues 150–184 lie on the Extracellular side of the membrane; that stretch reads MHIKDWLDRYERNTTWNFSMSDFETFSVSVKFTMT. N-linked (GlcNAc...) asparagine glycans are attached at residues asparagine 162 and asparagine 166. The helical transmembrane segment at 185-205 threads the bilayer; that stretch reads MFSLTPFTVAFISFLLLIFSL. Over 206-232 the chain is Cytoplasmic; the sequence is QKHLQKMQLNYKGHRDPRTKVHTNALK. The chain crosses the membrane as a helical span at residues 233–253; the sequence is IVISFLLFYASFFLCVLISWI. The Extracellular segment spans residues 254 to 261; the sequence is SELYQNTV. The chain crosses the membrane as a helical span at residues 262–282; sequence IYMLCETIGVFSPSSHSFLLI. The Cytoplasmic portion of the chain corresponds to 283–303; sequence LGNAKLRQAFLLVAAKVWAKR.

Belongs to the G-protein coupled receptor T2R family. As to expression, expressed in subsets of taste receptor cells of the tongue and palate epithelium and exclusively in gustducin-positive cells.

Its subcellular location is the membrane. Its function is as follows. Receptor that may play a role in the perception of bitterness and is gustducin-linked. May play a role in sensing the chemical composition of the gastrointestinal content. The activity of this receptor may stimulate alpha gustducin, mediate PLC-beta-2 activation and lead to the gating of TRPM5. The protein is Taste receptor type 2 member 13 (TAS2R13) of Homo sapiens (Human).